Consider the following 359-residue polypeptide: Peptide chain release factor 1 (359 aa).

Q235 is subject to N5-methylglutamine.

It belongs to the prokaryotic/mitochondrial release factor family. In terms of processing, methylated by PrmC. Methylation increases the termination efficiency of RF1.

The protein localises to the cytoplasm. Peptide chain release factor 1 directs the termination of translation in response to the peptide chain termination codons UAG and UAA. This is Peptide chain release factor 1 from Chelativorans sp. (strain BNC1).